Here is a 747-residue protein sequence, read N- to C-terminus: Asparagine synthetase [glutamine-hydrolyzing] 2 (747 aa).

The active-site For GATase activity is C2. The Glutamine amidotransferase type-2 domain maps to 2–218 (CGLAGIINLA…AGHYLEINLT (217 aa)). L-glutamine-binding positions include 52–56 (RLSIL), 77–79 (NGE), and D100. Position 395–396 (395–396 (SP)) interacts with ATP.

It belongs to the asparagine synthetase family.

The catalysed reaction is L-aspartate + L-glutamine + ATP + H2O = L-asparagine + L-glutamate + AMP + diphosphate + H(+). It participates in amino-acid biosynthesis; L-asparagine biosynthesis; L-asparagine from L-aspartate (L-Gln route): step 1/1. The protein is Asparagine synthetase [glutamine-hydrolyzing] 2 (asnH) of Bacillus subtilis (strain 168).